We begin with the raw amino-acid sequence, 548 residues long: Membrane protein insertase YidC (548 aa).

Residues 6-26 (NLLVIALLFVSFMIWQAWEQD) traverse the membrane as a helical segment. Residues 28-56 (NPQPQTQQTTQTTTTAAGSAADQGVPASG) are disordered. A compositionally biased stretch (low complexity) spans 29–42 (PQPQTQQTTQTTTT). 4 helical membrane-spanning segments follow: residues 350–370 (FVGN…GIMY), 424–444 (FPLI…MGSI), 458–478 (LSAQ…MFFI), and 499–519 (PVIF…YYIV).

The protein belongs to the OXA1/ALB3/YidC family. Type 1 subfamily. As to quaternary structure, interacts with the Sec translocase complex via SecD. Specifically interacts with transmembrane segments of nascent integral membrane proteins during membrane integration.

The protein localises to the cell inner membrane. Functionally, required for the insertion and/or proper folding and/or complex formation of integral membrane proteins into the membrane. Involved in integration of membrane proteins that insert both dependently and independently of the Sec translocase complex, as well as at least some lipoproteins. Aids folding of multispanning membrane proteins. In Salmonella heidelberg (strain SL476), this protein is Membrane protein insertase YidC.